A 102-amino-acid polypeptide reads, in one-letter code: MVVGIAHYLTVSAVLFTLGVFGIFLNRKNVIVILMSVELILLAVNINFVAFSAALGDLVGQVFALFVLTVAAAEAAIGLAILVVFFRNRGSIAVEDVNMMKG.

3 helical membrane passes run 5 to 25 (IAHY…GIFL), 31 to 51 (IVIL…FVAF), and 66 to 86 (FVLT…VVFF).

The protein belongs to the complex I subunit 4L family. As to quaternary structure, NDH-1 is composed of 14 different subunits. Subunits NuoA, H, J, K, L, M, N constitute the membrane sector of the complex.

It localises to the cell inner membrane. The catalysed reaction is a quinone + NADH + 5 H(+)(in) = a quinol + NAD(+) + 4 H(+)(out). In terms of biological role, NDH-1 shuttles electrons from NADH, via FMN and iron-sulfur (Fe-S) centers, to quinones in the respiratory chain. The immediate electron acceptor for the enzyme in this species is believed to be ubiquinone. Couples the redox reaction to proton translocation (for every two electrons transferred, four hydrogen ions are translocated across the cytoplasmic membrane), and thus conserves the redox energy in a proton gradient. This chain is NADH-quinone oxidoreductase subunit K, found in Mesorhizobium japonicum (strain LMG 29417 / CECT 9101 / MAFF 303099) (Mesorhizobium loti (strain MAFF 303099)).